The chain runs to 668 residues: Endoplasmic reticulum oxidoreductin-1 (668 aa).

A signal peptide spans 1–22 (MKPASRLFYLSLFALWSPEAQC). 4 cysteine pairs are disulfide-bonded: Cys-79–Cys-413, Cys-89–Cys-94, Cys-150–Cys-352, and Cys-416–Cys-419. Residues 116–142 (KLEGPRAKHPGKSVQKEEPKRPLQGKL) are disordered. 5 residues coordinate FAD: Arg-186, Thr-188, Trp-199, Ser-282, and His-285. Residues Asn-298 and Asn-307 are each glycosylated (N-linked (GlcNAc...) asparagine). Position 314 (Arg-314) interacts with FAD. N-linked (GlcNAc...) asparagine glycosylation is present at Asn-406. Catalysis depends on Cys-416, which acts as the Nucleophile. Cys-419 is a catalytic residue. An N-linked (GlcNAc...) asparagine glycan is attached at Asn-443. 2 disordered regions span residues 488–519 (VEESEEGQQPQSHEQIEGSENSGAHHIPDRAK) and 554–597 (GVTP…DPNF). Residues 494–509 (GQQPQSHEQIEGSENS) show a composition bias toward polar residues. Acidic residues predominate over residues 570–581 (DNNDDDDDDDEF).

The protein belongs to the EROs family. In terms of assembly, may function both as a monomer and a homodimer. The cofactor is FAD.

The protein resides in the endoplasmic reticulum membrane. Essential oxidoreductase that oxidizes proteins in the endoplasmic reticulum to produce disulfide bonds. Acts by oxidizing directly pdi1 isomerase through a direct disulfide exchange. Does not act as a direct oxidant of folding substrate, but relies on pdi1 to transfer oxidizing equivalent. Does not oxidize all pdi related proteins, suggesting that it can discriminate between pdi1 and related proteins. Its reoxidation probably involves electron transfer to molecular oxygen via FAD. Acts independently of glutathione. May be responsible for a significant proportion of reactive oxygen species (ROS) in the cell, thereby being a source of oxidative stress. The protein is Endoplasmic reticulum oxidoreductin-1 (ero-1) of Neurospora crassa (strain ATCC 24698 / 74-OR23-1A / CBS 708.71 / DSM 1257 / FGSC 987).